The primary structure comprises 262 residues: 14-3-3 protein epsilon (262 aa).

The segment at glutamine 236 to serine 262 is disordered. Serine 262 is subject to Phosphoserine.

This sequence belongs to the 14-3-3 family. In terms of assembly, homodimer. Interacts with phosphorylated yki. Interacts with pav (when serine phosphorylated); the interaction is necessary for association of the complex pav-14-3-3epsilon complex to the microtubules, thereby inhibiting microtubule sliding.

Functionally, positively regulates Ras-mediated pathways. Acts downstream or parallel to Raf, but upstream of nuclear factors in Ras signaling. Three mutants have been isolated, that suppress the rough eye phenotype caused by mutated Ras1 (sev-Ras1 v12). Inhibits yki activity by restricting its nuclear localization. Together with pav, has a role in the inhibition of microtubule sliding during neurite outgrowth. In Drosophila melanogaster (Fruit fly), this protein is 14-3-3 protein epsilon (14-3-3epsilon).